Consider the following 579-residue polypeptide: Folliculin (579 aa).

A disordered region spans residues 30–81 (PQGDGNEDSPGQGEQAEEEEGGIQMNSRMRAHSPAEGASVESSSPGPKKSDM). A phosphoserine mark is found at Ser62 and Ser73. The uDENN FLCN/SMCR8-type domain maps to 86–242 (RSLAAGHPGY…RNGNAARSLT (157 aa)). Positions 210–220 (AEQFGCPQRAQ) are essential for interaction with LDHA. The stretch at 287–310 (EKLADLEEESESWDNSEAEEEEKA) forms a coiled coil. Acidic residues predominate over residues 294 to 308 (EESESWDNSEAEEEE). The disordered stretch occupies residues 294–337 (EESESWDNSEAEEEEKAPVLPESTEGRELTQGPAESSSLSGCGS). A Phosphoserine modification is found at Ser302. A compositionally biased stretch (polar residues) spans 326–336 (PAESSSLSGCG). The cDENN FLCN/SMCR8-type domain maps to 339-491 (QPRKLPVFKS…ILNKIEAALT (153 aa)). 3 positions are modified to phosphoserine; by ULK1: Ser406, Ser537, and Ser542. A dDENN FLCN/SMCR8-type domain is found at 493–558 (QNLSVDVVDQ…LLKFWMTGLS (66 aa)). Residue Ser571 is modified to Phosphoserine.

It belongs to the folliculin family. As to quaternary structure, interacts (via C-terminus) with FNIP1 or FNIP2 (via C-terminus). Component of the lysosomal folliculin complex (LFC), composed of FLCN, FNIP1 (or FNIP2), RagA/RRAGA or RagB/RRAGB GDP-bound, RagC/RRAGC or RagD/RRAGD GTP-bound, and Ragulator. Interaction with FNIP1 or FNIP2 mediates indirect interaction with the PRKAA1, PRKAB1 and PRKAG1 subunits of 5'-AMP-activated protein kinase (AMPK). Interacts with HSP90AA1 in the presence of FNIP1. Interacts with HSP70, STUB1, CDC37, AHSA1, CCT2, STIP1, PTGES3 and PPP5C. Interacts with GABARAP; interaction takes place in the presence of FNIP1 and/or FNIP2. Interacts with RILP; the interaction is direct and promotes association between RILP and RAB34. Interacts with KIF3A and KIF3B. Interacts with lactate dehydrogenase LDHA, but not LDHB; the interaction is direct, may preferentially bind LDHA dimers rather than tetramers, and regulates LDHA activity, acting as an uncompetitive inhibitor. Phosphorylation by ULK1 modulates the interaction with GABARAP and is required to regulate autophagy. In terms of tissue distribution, expressed in most tissues tested, including skin, lung, kidney, heart, testis and stomach.

It is found in the lysosome membrane. It localises to the cytoplasm. Its subcellular location is the cytosol. The protein localises to the cell projection. The protein resides in the cilium. It is found in the cytoskeleton. It localises to the microtubule organizing center. Its subcellular location is the centrosome. The protein localises to the spindle. The protein resides in the nucleus. Its activity is regulated as follows. GTPase-activating activity is inhibited in the folliculin complex (LFC), which stabilizes the GDP-bound state of RagA/RRAGA (or RagB/RRAGB), because Arg-164 is located far from the RagC/RRAGC or RagD/RRAGD nucleotide pocket. Disassembly of the LFC complex upon amino acid restimulation liberates the GTPase-activating activity. Functionally, multi-functional protein, involved in both the cellular response to amino acid availability and in the regulation of glycolysis. GTPase-activating protein that plays a key role in the cellular response to amino acid availability through regulation of the non-canonical mTORC1 signaling cascade controlling the MiT/TFE factors TFEB and TFE3. Activates mTORC1 by acting as a GTPase-activating protein: specifically stimulates GTP hydrolysis by RagC/RRAGC or RagD/RRAGD, promoting the conversion to the GDP-bound state of RagC/RRAGC or RagD/RRAGD, and thereby activating the kinase activity of mTORC1. The GTPase-activating activity is inhibited during starvation and activated in presence of nutrients. Acts as a key component for non-canonical mTORC1-dependent control of the MiT/TFE factors TFEB and TFE3, while it is not involved in mTORC1-dependent phosphorylation of canonical RPS6KB1/S6K1 and EIF4EBP1/4E-BP1. In low-amino acid conditions, the lysosomal folliculin complex (LFC) is formed on the membrane of lysosomes, which inhibits the GTPase-activating activity of FLCN, inactivates mTORC1 and maximizes nuclear translocation of TFEB and TFE3. Upon amino acid restimulation, RagA/RRAGA (or RagB/RRAGB) nucleotide exchange promotes disassembly of the LFC complex and liberates the GTPase-activating activity of FLCN, leading to activation of mTORC1 and subsequent cytoplasmic retention of TFEB and TFE3. Indirectly acts as a positive regulator of Wnt signaling by promoting mTOR-dependent cytoplasmic retention of MiT/TFE factor TFE3. Required for the exit of hematopoietic stem cell from pluripotency by promoting mTOR-dependent cytoplasmic retention of TFE3, thereby increasing Wnt signaling. Acts as an inhibitor of browning of adipose tissue by regulating mTOR-dependent cytoplasmic retention of TFE3. Involved in the control of embryonic stem cells differentiation; together with LAMTOR1 it is necessary to recruit and activate RagC/RRAGC and RagD/RRAGD at the lysosomes, and to induce exit of embryonic stem cells from pluripotency via non-canonical, mTOR-independent TFE3 inactivation. In response to flow stress, regulates STK11/LKB1 accumulation and mTORC1 activation through primary cilia: may act by recruiting STK11/LKB1 to primary cilia for activation of AMPK resided at basal bodies, causing mTORC1 down-regulation. Together with FNIP1 and/or FNIP2, regulates autophagy: following phosphorylation by ULK1, interacts with GABARAP and promotes autophagy. Required for starvation-induced perinuclear clustering of lysosomes by promoting association of RILP with its effector RAB34. Regulates glycolysis by binding to lactate dehydrogenase LDHA, acting as an uncompetitive inhibitor. The polypeptide is Folliculin (Homo sapiens (Human)).